The following is a 931-amino-acid chain: Semaphorin-6C (931 aa).

The first 25 residues, 1-25 (MPRAPHSMPLLLLLLLLSSLPQAQA), serve as a signal peptide directing secretion. Over 26–605 (AFPQDPTPLL…ASASRSIPIP (580 aa)) the chain is Extracellular. Residues 31 to 517 (PTPLLTSDLQ…FPGCIVYLSL (487 aa)) form the Sema domain. Residue asparagine 71 is glycosylated (N-linked (GlcNAc...) asparagine). Cystine bridges form between cysteine 112–cysteine 122, cysteine 140–cysteine 149, cysteine 263–cysteine 374, and cysteine 288–cysteine 333. N-linked (GlcNAc...) asparagine glycosylation occurs at asparagine 287. N-linked (GlcNAc...) asparagine glycosylation is present at asparagine 438. Disulfide bonds link cysteine 480-cysteine 511, cysteine 520-cysteine 538, cysteine 526-cysteine 571, and cysteine 530-cysteine 546. The interval 556 to 591 (DVDLTGNQESTEHGDCQDGATGSQSGPGDSAYGVRR) is disordered. A helical membrane pass occupies residues 606–626 (LLLACVAAAFALGASVSGLLV). The Cytoplasmic segment spans residues 627–931 (SCACRRANRR…PAPHGGHFNF (305 aa)). Disordered stretches follow at residues 655–747 (LARL…GGPA) and 777–931 (HGPQ…HFNF). Residues 693 to 708 (PPELACLPTPETTPEL) show a composition bias toward low complexity. Basic and acidic residues predominate over residues 893-906 (PEGHRGRSLKRVDV). Over residues 911-923 (SPKPPLASPPQPA) the composition is skewed to pro residues.

It belongs to the semaphorin family.

The protein resides in the cell membrane. Functionally, may be a stop signal for the dorsal root ganglion neurons in their target areas, and possibly also for other neurons. May also be involved in the maintenance and remodeling of neuronal connections. The sequence is that of Semaphorin-6C (Sema6c) from Mus musculus (Mouse).